Reading from the N-terminus, the 107-residue chain is MNKKELFDAFDGFSQNLMVTLAEIEAMKKQVQSLVEENTILRLENTKLRERLSHLEHETVAKNPFKQRKDHLEGIYDEGFHICNFFYGQRRENDEECMFCRELLDRK.

The Zn(2+) site is built by His-81, Cys-83, Cys-97, and Cys-100.

The protein belongs to the YabA family. As to quaternary structure, homotetramer. Interacts with both DnaA and DnaN, acting as a bridge between these two proteins. Zn(2+) is required as a cofactor.

Its subcellular location is the cytoplasm. The protein resides in the nucleoid. Functionally, involved in control of chromosome replication initiation. Inhibits the cooperative binding of DnaA to the oriC region, thus negatively regulating initiation of chromosome replication. Inhibits the ability of DnaA-ATP to form a helix on DNA; does not disassemble preformed DnaA-DNA helices. Decreases the residence time of DnaA on the chromosome at its binding sites (oriC, replication forks and promoter-binding sites). Tethers DnaA to the replication machinery via the DNA polymerase beta sliding clamp subunit (dnaN). Associates with oriC and other DnaA targets on the chromosome in a DnaA-dependent manner. The sequence is that of Replication initiation control protein YabA from Streptococcus pyogenes serotype M18 (strain MGAS8232).